Reading from the N-terminus, the 256-residue chain is MNNAIFPNKFKAALAAQQVQIGCWSALASPITTEVLGLAGFDWLVLDGEHAPNDVTTLIPQLMALKGSASAPVVRVPTNEPVIIKRMLDIGFYNFLIPFVETQEEAARAVASTRYPPEGIRGVSVSHRANMFGTVPDYFAQSNKNITIIVQIESQLGVDNVDAIAATEGVDGIFVGPSDLAAALGHLGNASHPDVQQTIQHIFARAKAHGKSCGILAPVEADARRYLEWGATFVAVGSDLGAFRASTQKLADTFKK.

H50 functions as the Proton acceptor in the catalytic mechanism. Q151 is a binding site for substrate. Residue E153 coordinates Mg(2+). Residues S178 and D179 each contribute to the substrate site. D179 is a Mg(2+) binding site.

The protein belongs to the HpcH/HpaI aldolase family. KDGluc aldolase subfamily. In terms of assembly, homohexamer; trimer of dimers. Mg(2+) is required as a cofactor.

It catalyses the reaction 5-dehydro-4-deoxy-D-glucarate = 2-hydroxy-3-oxopropanoate + pyruvate. It carries out the reaction 2-dehydro-3-deoxy-D-glucarate = 2-hydroxy-3-oxopropanoate + pyruvate. It participates in carbohydrate acid metabolism; galactarate degradation; D-glycerate from galactarate: step 2/3. Functionally, catalyzes the reversible retro-aldol cleavage of both 5-keto-4-deoxy-D-glucarate and 2-keto-3-deoxy-D-glucarate to pyruvate and tartronic semialdehyde. In Salmonella paratyphi C (strain RKS4594), this protein is 5-keto-4-deoxy-D-glucarate aldolase.